The sequence spans 130 residues: Small ribosomal subunit protein uS11 (130 aa).

It belongs to the universal ribosomal protein uS11 family. As to quaternary structure, part of the 30S ribosomal subunit. Interacts with proteins S7 and S18. Binds to IF-3.

Functionally, located on the platform of the 30S subunit, it bridges several disparate RNA helices of the 16S rRNA. Forms part of the Shine-Dalgarno cleft in the 70S ribosome. In Bdellovibrio bacteriovorus (strain ATCC 15356 / DSM 50701 / NCIMB 9529 / HD100), this protein is Small ribosomal subunit protein uS11.